The sequence spans 120 residues: NAD(P)H-quinone oxidoreductase subunit 3, chloroplastic (120 aa).

3 consecutive transmembrane segments (helical) span residues 9–29, 64–84, and 88–108; these read IFWAFLIISSLIPILAFFISG, MFALVFVVFDVETVFLYPWAM, and VLGLSVFLEAFVFVLILIVGL.

Belongs to the complex I subunit 3 family. As to quaternary structure, NDH is composed of at least 16 different subunits, 5 of which are encoded in the nucleus.

The protein localises to the plastid. The protein resides in the chloroplast thylakoid membrane. The catalysed reaction is a plastoquinone + NADH + (n+1) H(+)(in) = a plastoquinol + NAD(+) + n H(+)(out). It catalyses the reaction a plastoquinone + NADPH + (n+1) H(+)(in) = a plastoquinol + NADP(+) + n H(+)(out). In terms of biological role, NDH shuttles electrons from NAD(P)H:plastoquinone, via FMN and iron-sulfur (Fe-S) centers, to quinones in the photosynthetic chain and possibly in a chloroplast respiratory chain. The immediate electron acceptor for the enzyme in this species is believed to be plastoquinone. Couples the redox reaction to proton translocation, and thus conserves the redox energy in a proton gradient. The protein is NAD(P)H-quinone oxidoreductase subunit 3, chloroplastic of Jasminum nudiflorum (Winter jasmine).